Reading from the N-terminus, the 363-residue chain is Chorismate synthase (363 aa).

The interval 36–58 (SESDIQGDLDRRRPGQSKITTPR) is disordered. R47 serves as a coordination point for NADP(+). Residues 124-126 (RSS), G286, 301-305 (KPTAT), and R327 contribute to the FMN site.

This sequence belongs to the chorismate synthase family. Homotetramer. The cofactor is FMNH2.

The catalysed reaction is 5-O-(1-carboxyvinyl)-3-phosphoshikimate = chorismate + phosphate. The protein operates within metabolic intermediate biosynthesis; chorismate biosynthesis; chorismate from D-erythrose 4-phosphate and phosphoenolpyruvate: step 7/7. Functionally, catalyzes the anti-1,4-elimination of the C-3 phosphate and the C-6 proR hydrogen from 5-enolpyruvylshikimate-3-phosphate (EPSP) to yield chorismate, which is the branch point compound that serves as the starting substrate for the three terminal pathways of aromatic amino acid biosynthesis. This reaction introduces a second double bond into the aromatic ring system. The chain is Chorismate synthase from Crocosphaera subtropica (strain ATCC 51142 / BH68) (Cyanothece sp. (strain ATCC 51142)).